The chain runs to 426 residues: Glutamate-1-semialdehyde 2,1-aminomutase (426 aa).

N6-(pyridoxal phosphate)lysine is present on Lys-265.

It belongs to the class-III pyridoxal-phosphate-dependent aminotransferase family. HemL subfamily. As to quaternary structure, homodimer. Pyridoxal 5'-phosphate serves as cofactor.

The protein localises to the cytoplasm. It carries out the reaction (S)-4-amino-5-oxopentanoate = 5-aminolevulinate. It functions in the pathway porphyrin-containing compound metabolism; protoporphyrin-IX biosynthesis; 5-aminolevulinate from L-glutamyl-tRNA(Glu): step 2/2. This is Glutamate-1-semialdehyde 2,1-aminomutase from Shigella sonnei (strain Ss046).